Here is a 454-residue protein sequence, read N- to C-terminus: Mogroside I-E synthase (454 aa).

His18 serves as the catalytic Proton acceptor. An an anthocyanidin-binding site is contributed by His18. The Charge relay role is filled by Asp111. An an anthocyanidin-binding site is contributed by His144. A disulfide bridge links Cys259 with Cys331. Residues Ser278, Cys331, Gln333, Trp351, Asn352, Ser353, and Glu356 each coordinate UDP-alpha-D-glucose. Ala371 lines the an anthocyanidin pocket. 2 residues coordinate UDP-alpha-D-glucose: Asp372 and Gln373.

It belongs to the UDP-glycosyltransferase family. In terms of tissue distribution, highly expressed in young fruits 15 days after anthesis (15-DAA).

It catalyses the reaction mogrol + UDP-alpha-D-glucose = mogroside IE + UDP + H(+). It participates in secondary metabolite biosynthesis; terpenoid biosynthesis. Its activity is regulated as follows. Activity is increased by Mg(2+). In terms of biological role, UDP-glycosyltransferase involved in the biosynthesis of cucurbitacin and mogroside tetracyclic triterpene natural products (e.g. siamenoside I and mogrosides IV, V and VI). Cucurbitacins have cytotoxic properties and exhibit deterrent taste as a defense barrier against herbivores. Mogrosides are nonsugar highly oxygenated compounds used as high-intensity zero-calorie sweeteners; they also possess pharmacological properties such as regulating immunity, lowering blood sugar and lipid levels, protecting the liver, and acting as antioxidants and antitumor agents. Catalyzes the transfer of a glucose moiety to the C-3 hydroxyl of mogrol to form mogroside I-E. Besides mogrol, UGT74AC1 also shows activity in vitro with quercetin and naringenin as substrate. This chain is Mogroside I-E synthase, found in Siraitia grosvenorii (Monk's fruit).